A 464-amino-acid chain; its full sequence is Galactose-proton symporter (464 aa).

The Cytoplasmic portion of the chain corresponds to 1-15; that stretch reads MPDAKKQGRSNKAMT. A helical transmembrane segment spans residues 16–36; the sequence is FFVCFLAALAGLLFGLDIGVI. The Periplasmic segment spans residues 37–56; sequence AGALPFIADEFQITSHTQEW. A helical transmembrane segment spans residues 57–77; it reads VVSSMMFGAAVGAVGSGWLSF. Residues 78-84 lie on the Cytoplasmic side of the membrane; the sequence is KLGRKKS. The chain crosses the membrane as a helical span at residues 85–105; sequence LMIGAILFVAGSLFSAAAPNV. The Periplasmic portion of the chain corresponds to 106 to 112; that stretch reads EVLILSR. A helical membrane pass occupies residues 113–133; that stretch reads VLLGLAVGVASYTAPLYLSEI. The Cytoplasmic portion of the chain corresponds to 134 to 139; the sequence is APEKIR. Residues 140–160 form a helical membrane-spanning segment; it reads GSMISMYQLMITIGILGAYLS. Topologically, residues 161 to 171 are periplasmic; it reads DTAFSYTGAWR. The chain crosses the membrane as a helical span at residues 172–192; that stretch reads WMLGVIIIPAILLLIGVFFLP. Residues 193 to 250 are Cytoplasmic-facing; the sequence is DSPRWFAAKRRFVDAERVLLRLRDTSAEAKRELDEIRESLQVKQSGWALFKENSNFRR. The chain crosses the membrane as a helical span at residues 251–271; sequence AVFLGVLLQVMQQFTGMNVIM. Residues 272 to 290 lie on the Periplasmic side of the membrane; sequence YYAPKIFELAGYTNTTEQM. The chain crosses the membrane as a helical span at residues 291–311; sequence WGTVIVGLTNVLATFIAIGLV. The Cytoplasmic portion of the chain corresponds to 312 to 321; it reads DRWGRKPTLT. The helical transmembrane segment at 322–342 threads the bilayer; the sequence is LGFLVMAAGMGVLGTMMHIGI. Over 343–351 the chain is Periplasmic; the sequence is HSPSAQYFA. Residues 352–372 traverse the membrane as a helical segment; that stretch reads IAMLLMFIVGFAMSAGPLIWV. Residues 373-394 are Cytoplasmic-facing; sequence LCSEIQPLKGRDFGITCSTATN. Residues 395–415 form a helical membrane-spanning segment; sequence WIANMIVGATFLTMLNTLGNA. Position 416 (Asn416) is a topological domain, periplasmic. Residues 417-437 form a helical membrane-spanning segment; the sequence is TFWVYAALNVLFILLTLWLVP. Topologically, residues 438–464 are cytoplasmic; it reads ETKHVSLEHIERNLMKGRKLREIGAHD.

It belongs to the major facilitator superfamily. Sugar transporter (TC 2.A.1.1) family.

Its subcellular location is the cell inner membrane. In terms of biological role, uptake of galactose across the boundary membrane with the concomitant transport of protons into the cell (symport system). The chain is Galactose-proton symporter (galP) from Escherichia coli O6:H1 (strain CFT073 / ATCC 700928 / UPEC).